A 204-amino-acid chain; its full sequence is Peptide deformylase (204 aa).

Residues Cys-131 and His-174 each contribute to the Fe cation site. Residue Glu-175 is part of the active site. His-178 contributes to the Fe cation binding site.

It belongs to the polypeptide deformylase family. Requires Fe(2+) as cofactor.

The enzyme catalyses N-terminal N-formyl-L-methionyl-[peptide] + H2O = N-terminal L-methionyl-[peptide] + formate. In terms of biological role, removes the formyl group from the N-terminal Met of newly synthesized proteins. Requires at least a dipeptide for an efficient rate of reaction. N-terminal L-methionine is a prerequisite for activity but the enzyme has broad specificity at other positions. The protein is Peptide deformylase of Streptococcus gordonii (strain Challis / ATCC 35105 / BCRC 15272 / CH1 / DL1 / V288).